Consider the following 188-residue polypeptide: Putative manganese efflux pump MntP (188 aa).

6 helical membrane passes run 3–23, 39–59, 65–85, 110–130, 131–151, and 167–187; these read LFSLWVMAFGLSMDAFAVSIC, AGLYFGLFQAVMPLIGFLLGV, ITDYDHWVAFFLLALIGVNML, LGFATSIDALAVGVTFAFLSV, DIYSSVVTIGLITAALSIIGV, and ILGGLILIGLGVKILMEHTLF.

The protein belongs to the MntP (TC 9.B.29) family.

The protein resides in the cell inner membrane. Functionally, probably functions as a manganese efflux pump. The protein is Putative manganese efflux pump MntP of Mannheimia succiniciproducens (strain KCTC 0769BP / MBEL55E).